The chain runs to 575 residues: MRAWTGSWRWIMLILFAWGTLLFYIGGHLVRDNDHPDHSSRELSKILAKLERLKQQNEDLRRMAESLRIPEGPIDQGTATGRVRVLEEQLVKAKEQIENYKKQARNGLGKDHEILRRRIENGAKELWFFLQSELKKLKHLEGNELQRHADEILLDLGHHERSIMTDLYYLSQTDGAGDWREKEAKDLTELVQRRITYLQNPKDCSKARKLVCNINKGCGYGCQLHHVVYCFMIAYGTQRTLILESQNWRYATGGWETVFRPVSETCTDRSGLSTGHWSGEVNDKNIQVVELPIVDSLHPRPPYLPLAVPEDLADRLLRVHGDPAVWWVSQFVKYLIRPQPWLEKEIEEATKKLGFKHPVIGVHVRRTDKVGTEAAFHPIEEYMVHVEEHFQLLARRMQVDKKRVYLATDDPTLLKEAKTKYSNYEFISDNSISWSAGLHNRYTENSLRGVILDIHFLSQADFLVCTFSSQVCRVAYEIMQTLHPDASANFHSLDDIYYFGGQNAHNQIAVYPHKPRTEEEIPMEPGDIIGVAGNHWDGYSKGINRKLGKTGLYPSYKVREKIETVKYPTYPEAEK.

At 1-9 (MRAWTGSWR) the chain is on the cytoplasmic side. The chain crosses the membrane as a helical; Signal-anchor for type II membrane protein span at residues 10–30 (WIMLILFAWGTLLFYIGGHLV). The Lumenal segment spans residues 31-575 (RDNDHPDHSS…KYPTYPEAEK (545 aa)). 3 cysteine pairs are disulfide-bonded: cysteine 204/cysteine 266, cysteine 212/cysteine 230, and cysteine 218/cysteine 222. The region spanning 206–493 (KARKLVCNIN…PDASANFHSL (288 aa)) is the GT23 domain. Position 278 is a phosphoserine (serine 278). An SH3-binding motif is present at residues 299 to 305 (PRPPYLP). The segment at 365–366 (RR) is important for donor substrate binding. Cysteine 465 and cysteine 472 form a disulfide bridge. The 62-residue stretch at 502 to 563 (QNAHNQIAVY…PSYKVREKIE (62 aa)) folds into the SH3 domain.

It belongs to the glycosyltransferase 23 family. In terms of processing, tyrosine phosphorylated by PKDCC/VLK.

Its subcellular location is the golgi apparatus. The protein localises to the golgi stack membrane. It carries out the reaction N(4)-{beta-D-GlcNAc-(1-&gt;2)-alpha-D-Man-(1-&gt;3)-[beta-D-GlcNAc-(1-&gt;2)-alpha-D-Man-(1-&gt;6)]-beta-D-Man-(1-&gt;4)-beta-D-GlcNAc-(1-&gt;4)-beta-D-GlcNAc}-L-asparaginyl-[protein] + GDP-beta-L-fucose = an N(4)-{beta-D-GlcNAc-(1-&gt;2)-alpha-D-Man-(1-&gt;3)-[beta-D-GlcNAc-(1-&gt;2)-alpha-D-Man-(1-&gt;6)]-beta-D-Man-(1-&gt;4)-beta-D-GlcNAc-(1-&gt;4)-[alpha-L-Fuc-(1-&gt;6)]-beta-D-GlcNAc}-L-asparaginyl-[protein] + GDP + H(+). It participates in protein modification; protein glycosylation. Functionally, catalyzes the addition of fucose in alpha 1-6 linkage to the first GlcNAc residue, next to the peptide chains in N-glycans. The chain is Alpha-(1,6)-fucosyltransferase (Fut8) from Mus musculus (Mouse).